The following is a 158-amino-acid chain: Lipoprotein signal peptidase (158 aa).

The next 4 membrane-spanning stretches (helical) occupy residues 7 to 27, 38 to 58, 67 to 87, and 95 to 115; these read LFWIAAFIAFFVDQLTKYWVV, ILPGIFHFTYVTNTGAAFSLF, WLSLGVSLLLIGLALLGPVLD, and GLILGGAMGNGIDRFALGYVV. Residues aspartate 116 and aspartate 132 contribute to the active site. Residues 125 to 145 form a helical membrane-spanning segment; sequence FAVFNMADSFISIGIVCLLLA.

Belongs to the peptidase A8 family.

The protein resides in the cell inner membrane. It carries out the reaction Release of signal peptides from bacterial membrane prolipoproteins. Hydrolyzes -Xaa-Yaa-Zaa-|-(S,diacylglyceryl)Cys-, in which Xaa is hydrophobic (preferably Leu), and Yaa (Ala or Ser) and Zaa (Gly or Ala) have small, neutral side chains.. The protein operates within protein modification; lipoprotein biosynthesis (signal peptide cleavage). Its function is as follows. This protein specifically catalyzes the removal of signal peptides from prolipoproteins. The sequence is that of Lipoprotein signal peptidase from Nostoc sp. (strain PCC 7120 / SAG 25.82 / UTEX 2576).